The following is a 261-amino-acid chain: Bidirectional sugar transporter SWEET1b (261 aa).

The Extracellular portion of the chain corresponds to 1–6; that stretch reads MEDLAK. Residues 7 to 27 form a helical membrane-spanning segment; sequence FLFGVSGNVIALFLFLSPVPT. In terms of domain architecture, MtN3/slv 1 spans 7–95; it reads FLFGVSGNVI…VVFLVFASTH (89 aa). Residues 28 to 42 lie on the Cytoplasmic side of the membrane; the sequence is FWRIIRRKSTEDFSG. A helical membrane pass occupies residues 43-63; it reads VPYNMTLINCLLSAWYGLPFV. Topologically, residues 64–71 are extracellular; that stretch reads SPNNILVS. The helical transmembrane segment at 72–92 threads the bilayer; that stretch reads TINGAGAVIETAYVVVFLVFA. At 93 to 101 the chain is on the cytoplasmic side; that stretch reads STHKTRLRT. The helical transmembrane segment at 102 to 122 threads the bilayer; sequence LGLAAAVASVFAAVALVSLLA. Residues 123–129 lie on the Extracellular side of the membrane; the sequence is LHGQHRK. A helical transmembrane segment spans residues 130 to 150; it reads LLCGVAATVCSICMYASPLSI. Residues 133 to 215 form the MtN3/slv 2 domain; the sequence is GVAATVCSIC…VLYAIYRNNK (83 aa). Over 151-164 the chain is Cytoplasmic; the sequence is MRLVIKTKSVEYMP. A helical membrane pass occupies residues 165–185; it reads FLLSLAVFLCGTSWFIYGLLG. The Extracellular portion of the chain corresponds to 186 to 189; that stretch reads RDPF. The helical transmembrane segment at 190-210 threads the bilayer; it reads VTIPNGCGSFLGAVQLVLYAI. Residues 211-261 lie on the Cytoplasmic side of the membrane; sequence YRNNKGAGGGSGGKQAGDDDVEMAEGRNNKVADGGAAEDDSTAGGKAGTEV. Residues 218 to 261 are disordered; the sequence is GGGSGGKQAGDDDVEMAEGRNNKVADGGAAEDDSTAGGKAGTEV.

Belongs to the SWEET sugar transporter family. As to quaternary structure, forms homodimers.

Its subcellular location is the cell membrane. The enzyme catalyses D-glucose(out) = D-glucose(in). The catalysed reaction is D-galactose(in) = D-galactose(out). Mediates transport of sugars across the plasma membrane. Can transport glucose and galactose, but not fructose, mannose and sucrose. The sequence is that of Bidirectional sugar transporter SWEET1b (SWEET1B) from Oryza sativa subsp. indica (Rice).